The following is a 397-amino-acid chain: Protein-glutamate methylesterase/protein-glutamine glutaminase of group 2 operon (397 aa).

The Response regulatory domain occupies 21–139; it reads RVMIVDDSVV…EASAADTFHH (119 aa). Asp-72 carries the 4-aspartylphosphate modification. One can recognise a CheB-type methylesterase domain in the interval 199–388; the sequence is PFSTLAPKVL…LPLNQIGAKV (190 aa). Catalysis depends on residues Ser-213, His-241, and Asp-337.

This sequence belongs to the CheB family. In terms of processing, phosphorylated by CheA. Phosphorylation of the N-terminal regulatory domain activates the methylesterase activity.

The protein localises to the cytoplasm. It carries out the reaction [protein]-L-glutamate 5-O-methyl ester + H2O = L-glutamyl-[protein] + methanol + H(+). It catalyses the reaction L-glutaminyl-[protein] + H2O = L-glutamyl-[protein] + NH4(+). Functionally, involved in chemotaxis. Part of a chemotaxis signal transduction system that modulates chemotaxis in response to various stimuli. Catalyzes the demethylation of specific methylglutamate residues introduced into the chemoreceptors (methyl-accepting chemotaxis proteins or MCP) by CheR. Also mediates the irreversible deamidation of specific glutamine residues to glutamic acid. In Bradyrhizobium diazoefficiens (strain JCM 10833 / BCRC 13528 / IAM 13628 / NBRC 14792 / USDA 110), this protein is Protein-glutamate methylesterase/protein-glutamine glutaminase of group 2 operon.